Reading from the N-terminus, the 333-residue chain is Adenosine deaminase (333 aa).

Residues H12 and H14 each coordinate Zn(2+). Substrate is bound by residues H14, D16, and G170. A Zn(2+)-binding site is contributed by H197. The active-site Proton donor is the E200. Zn(2+) is bound at residue D278. Position 279 (D279) interacts with substrate.

The protein belongs to the metallo-dependent hydrolases superfamily. Adenosine and AMP deaminases family. Adenosine deaminase subfamily. The cofactor is Zn(2+).

It carries out the reaction adenosine + H2O + H(+) = inosine + NH4(+). The enzyme catalyses 2'-deoxyadenosine + H2O + H(+) = 2'-deoxyinosine + NH4(+). Its function is as follows. Catalyzes the hydrolytic deamination of adenosine and 2-deoxyadenosine. The sequence is that of Adenosine deaminase from Shigella flexneri serotype 5b (strain 8401).